We begin with the raw amino-acid sequence, 393 residues long: Protein shisa-9B (393 aa).

An N-terminal signal peptide occupies residues 1-20; the sequence is MKSTGLLLGYFLMKVLVCDA. Residues 21-131 lie on the Extracellular side of the membrane; sequence EGEPGKSLDG…MDQHDPTKDK (111 aa). The disordered stretch occupies residues 28–52; sequence LDGAVTASGSNDSRDGENGLSETPH. N-linked (GlcNAc...) asparagine glycosylation occurs at Asn-38. Residues 132–152 form a helical membrane-spanning segment; that stretch reads TNLIVYIICGVVAIMALVGIF. Over 153–393 the chain is Cytoplasmic; sequence TKLGLEKAHR…VTNSKTEVTV (241 aa). The tract at residues 307–340 is disordered; that stretch reads QKQNGHKSKSTKVHSSHPLAYGSNTIANPGRMSS. Basic residues predominate over residues 310-321; that stretch reads NGHKSKSTKVHS.

The protein belongs to the shisa family. SHISA9 subfamily. As to quaternary structure, component of some AMPA receptors (ionotropic glutamate receptors) complex.

Its subcellular location is the cell projection. The protein resides in the dendritic spine membrane. It is found in the synapse. Functionally, regulator of short-term neuronal synaptic plasticity in the dentate gyrus. Associates with AMPA receptors (ionotropic glutamate receptors) in synaptic spines and promotes AMPA receptor desensitization at excitatory synapses. The sequence is that of Protein shisa-9B (shisa9b) from Danio rerio (Zebrafish).